The following is a 308-amino-acid chain: 15-cis-phytoene synthase (308 aa).

Belongs to the phytoene/squalene synthase family. It depends on ATP as a cofactor. Mn(2+) serves as cofactor. Requires Mg(2+) as cofactor.

The catalysed reaction is 2 (2E,6E,10E)-geranylgeranyl diphosphate = 15-cis-phytoene + 2 diphosphate. The protein operates within carotenoid biosynthesis; phytoene biosynthesis. Its function is as follows. Involved in the biosynthesis of carotenoids. Catalyzes the condensation of two molecules of geranylgeranyl diphosphate (GGPP) to give prephytoene diphosphate (PPPP) and the subsequent rearrangement of the cyclopropylcarbinyl intermediate to yield 15-cis-phytoene. The polypeptide is 15-cis-phytoene synthase (crtB) (Synechococcus elongatus (strain ATCC 33912 / PCC 7942 / FACHB-805) (Anacystis nidulans R2)).